The chain runs to 542 residues: Putative cysteine ligase BshC (542 aa).

The stretch at 458 to 487 (VAKNAAILQAQIEFLQHALERALLRKHETE) forms a coiled coil.

Belongs to the BshC family.

Functionally, involved in bacillithiol (BSH) biosynthesis. May catalyze the last step of the pathway, the addition of cysteine to glucosamine malate (GlcN-Mal) to generate BSH. In Geobacillus kaustophilus (strain HTA426), this protein is Putative cysteine ligase BshC.